A 106-amino-acid polypeptide reads, in one-letter code: UPF0145 protein VV2_1464 (106 aa).

This sequence belongs to the UPF0145 family.

This chain is UPF0145 protein VV2_1464, found in Vibrio vulnificus (strain CMCP6).